A 215-amino-acid chain; its full sequence is MTIRDRDPLEVFSNSLVPMVVEQTARGERSFDIFSRLLQERIIFLTGPVYDQVSSLICAQLLYLESVNPTKEISFYINSPGGVVSAGLAIYDTMQYIRCPVSTVCIGQAASMGSLLLAGGEKGHRYALPNARVMVHQPSGGAQGQASDIEIQAREILIIRQRLNEIYREHTGQTLEQIEQKLERDSYLSANEAREFGLIDKVVERNPHETTPDPS.

Catalysis depends on serine 111, which acts as the Nucleophile. Histidine 136 is an active-site residue.

This sequence belongs to the peptidase S14 family. Fourteen ClpP subunits assemble into 2 heptameric rings which stack back to back to give a disk-like structure with a central cavity, resembling the structure of eukaryotic proteasomes.

Its subcellular location is the cytoplasm. The catalysed reaction is Hydrolysis of proteins to small peptides in the presence of ATP and magnesium. alpha-casein is the usual test substrate. In the absence of ATP, only oligopeptides shorter than five residues are hydrolyzed (such as succinyl-Leu-Tyr-|-NHMec, and Leu-Tyr-Leu-|-Tyr-Trp, in which cleavage of the -Tyr-|-Leu- and -Tyr-|-Trp bonds also occurs).. Functionally, cleaves peptides in various proteins in a process that requires ATP hydrolysis. Has a chymotrypsin-like activity. Plays a major role in the degradation of misfolded proteins. The polypeptide is ATP-dependent Clp protease proteolytic subunit 1 (Gluconobacter oxydans (strain 621H) (Gluconobacter suboxydans)).